The sequence spans 334 residues: G2/mitotic-specific cyclin-1 (334 aa).

It belongs to the cyclin family. Cyclin AB subfamily.

Functionally, essential for the control of the cell cycle at the G2/M (mitosis) transition. The sequence is that of G2/mitotic-specific cyclin-1 (CYC1) from Trypanosoma brucei brucei.